Here is a 700-residue protein sequence, read N- to C-terminus: Auxin response factor 18 (700 aa).

Positions 128-230 (FAKTLTQSDA…DLCVGIRRAK (103 aa)) form a DNA-binding region, TF-B3. 2 disordered regions span residues 234-254 (VGGP…AAGG) and 560-595 (VKKS…DNLS). A compositionally biased stretch (pro residues) spans 239-250 (FLPPPPPPPPTP). Residues 565-594 (SDGNAENTVNKSNSDVSSPRSNQNGTTDNL) are compositionally biased toward polar residues. The 84-residue stretch at 614-697 (TGHCKVFMQS…NILTDTSGDN (84 aa)) folds into the PB1 domain.

The protein belongs to the ARF family. In terms of assembly, homodimers and heterodimers. In terms of tissue distribution, expressed in roots, culms, leaves and young panicles.

The protein resides in the nucleus. Auxin response factors (ARFs) are transcriptional factors that bind specifically to the DNA sequence 5'-TGTCTC-3' found in the auxin-responsive promoter elements (AuxREs). The polypeptide is Auxin response factor 18 (ARF18) (Oryza sativa subsp. japonica (Rice)).